We begin with the raw amino-acid sequence, 216 residues long: Elongation factor Ts (216 aa).

The involved in Mg(2+) ion dislocation from EF-Tu stretch occupies residues 81 to 84 (TDFV).

This sequence belongs to the EF-Ts family.

It localises to the cytoplasm. Functionally, associates with the EF-Tu.GDP complex and induces the exchange of GDP to GTP. It remains bound to the aminoacyl-tRNA.EF-Tu.GTP complex up to the GTP hydrolysis stage on the ribosome. The polypeptide is Elongation factor Ts (Geobacter sp. (strain M21)).